Consider the following 260-residue polypeptide: MGRRIRIQRKGAGGIFKSHNKHRKGASKLRPLDYAERHGYIKGLVKDIIHDPGRGAPLAIIAFRDPYKYKTVKTTVVAAEGMHTGQFIHCGAKAQIQIGNIVPVGTLPEGTTICNVENKSGDRGVIARASGNYATVIAHNPDTKKTRIRLPSGAKKVVQSVNRAMIGLVAGGGRTDKPLLKAGRSYHKYKAKRNSWPRVRGVAMNPVEHPHGGGNHQHIGHPSTVRRDASAGKKVGLIAARRTGRIRGGKPVKFTKEENV.

The interval 208 to 230 is disordered; it reads EHPHGGGNHQHIGHPSTVRRDAS.

This sequence belongs to the universal ribosomal protein uL2 family.

The protein localises to the cytoplasm. The protein is Large ribosomal subunit protein uL2 of Caenorhabditis elegans.